Reading from the N-terminus, the 173-residue chain is Flagellar biosynthetic protein FliV (173 aa).

Belongs to the FliB family.

Required for the secretion of flagellin and expression of motility. The sequence is that of Flagellar biosynthetic protein FliV (fliV) from Salmonella muenchen.